Consider the following 371-residue polypeptide: MKLMQELAEIIPGKAYNDVKVMVAMSGGVDSSTVAAYLHRVGYKVIGVTLQLHNNFTSTQTNRKTCCAGSDIFDAKRVAAQFGFLHYVVNMEETFRKEVIENFAESYLKGETPVPCVKCNQTVKFRDLMKIAKSLSVDALATGHYVRRLTTTNGVELHKGIDPSKDQSYFLFNTTREQLEFLRFPLGNLKKSETRDLARKLSVDISEKPESQDICFVNGKSYADVIKKFRPDAQRPGKILSTDGEVLGTHNGTIHYTIGQRHGLQLSAPIPLYVVKIDAQNNIIIVGTRDKLQQRSLYVKEVNWLDRKELTAGLECEVKLRSGADTVKGYLYPNGELLKVSLAEEPKCAIAPGQACVMYHGSKVLGGGWIV.

Residues 24-31 and L50 each bind ATP; that span reads AMSGGVDS. Catalysis depends on C119, which acts as the Nucleophile. A disulfide bridge links C119 with C215. Residue G143 participates in ATP binding. An interaction with tRNA region spans residues 165–167; the sequence is KDQ. Residue C215 is the Cysteine persulfide intermediate of the active site.

This sequence belongs to the MnmA/TRMU family.

The protein resides in the cytoplasm. It carries out the reaction S-sulfanyl-L-cysteinyl-[protein] + uridine(34) in tRNA + AH2 + ATP = 2-thiouridine(34) in tRNA + L-cysteinyl-[protein] + A + AMP + diphosphate + H(+). Catalyzes the 2-thiolation of uridine at the wobble position (U34) of tRNA, leading to the formation of s(2)U34. This is tRNA-specific 2-thiouridylase MnmA from Neorickettsia sennetsu (strain ATCC VR-367 / Miyayama) (Ehrlichia sennetsu).